A 170-amino-acid chain; its full sequence is Fimbrial protein (170 aa).

Residues 1–7 (MNTLQKG) constitute a propeptide that is removed on maturation. F8 is modified (N-methylphenylalanine). A helical membrane pass occupies residues 8–28 (FTLIELMIVIAIVGILAAVAL). Residue S70 is glycosylated (O-linked (Gal...) serine). At S100 the chain carries O-(sn-1-glycerophosphoryl)serine. C127 and C163 are disulfide-bonded.

It belongs to the N-Me-Phe pilin family. The pili are polar flexible filaments of about 5.4 nanometers diameter and 2.5 micrometers average length; they consist of only a single polypeptide chain arranged in a helical configuration of five subunits per turn in the assembled pilus. Post-translationally, O-linked glycan consists of GlcNAc-Gal disaccharide.

It is found in the fimbrium. It localises to the membrane. In terms of biological role, major component of the type IV pilus (T4P) that plays a role in cellular adherence, microcolony formation as well as twitching motility. The sequence is that of Fimbrial protein (pilE) from Neisseria meningitidis serogroup A / serotype 4A (strain DSM 15465 / Z2491).